The following is a 2201-amino-acid chain: Activating signal cointegrator 1 complex subunit 3 (2201 aa).

Ser12 carries the post-translational modification Phosphoserine. 2 coiled-coil regions span residues 18–81 and 328–356; these read KQDN…KQIV and IQSE…KAGE. Residues 486-669 enclose the Helicase ATP-binding 1 domain; the sequence is ETAYNTNENM…FLHVNPCIGL (184 aa). ATP is bound at residue 499–506; the sequence is APTGAGKT. The residue at position 572 (Lys572) is an N6-acetyllysine. A DEVH box motif is present at residues 611 to 614; it reads DEVH. The region spanning 696-914 is the Helicase C-terminal 1 domain; the sequence is QLNNMDEVCY…GTVTNVEEAV (219 aa). The 310-residue stretch at 978–1287 folds into the SEC63 1 domain; that stretch reads STDLGRTASH…GAEAVCIINF (310 aa). Positions 1336-1511 constitute a Helicase ATP-binding 2 domain; it reads HTLYHTDCNV…WLNIRQMGLF (176 aa). 1349–1356 is an ATP binding site; that stretch reads APTGSGKT. Positions 1453–1456 match the DEIH box motif; it reads DEIH. The 196-residue stretch at 1544–1739 folds into the Helicase C-terminal 2 domain; it reads PTFQAIRSHS…VLSDHLNAEI (196 aa). Residues 1812–2176 form the SEC63 2 domain; that stretch reads PLTYGRIASY…LGLDQQYDIH (365 aa).

Belongs to the helicase family. In terms of assembly, identified in the ASCC complex that contains ASCC1, ASCC2 and ASCC3. Functions as a scaffolding subunit that interacts directly with both ASCC1 and ASCC2. Interacts directly with ALKBH3, and thereby recruits ALKBH3 to the ASCC complex. Part of the ASC-1/TRIP4 complex, that contains TRIP4, ASCC1, ASCC2 and ASCC3. Part of the RQT (ribosome quality control trigger) complex, that contains ASCC2, ASCC3 and TRIP4. Associates with ribosomes; recruited to collided ribosomes. Interacts with ZCCHC4. Interacts with ZNF598. Interacts with RPS3.

Its subcellular location is the nucleus. It localises to the nucleus speckle. The protein resides in the cytoplasm. The protein localises to the cytosol. The catalysed reaction is Couples ATP hydrolysis with the unwinding of duplex DNA by translocating in the 3'-5' direction.. The enzyme catalyses ATP + H2O = ADP + phosphate + H(+). Its function is as follows. ATPase involved both in DNA repair and rescue of stalled ribosomes. 3'-5' DNA helicase involved in repair of alkylated DNA: promotes DNA unwinding to generate single-stranded substrate needed for ALKBH3, enabling ALKBH3 to process alkylated N3-methylcytosine (3mC) within double-stranded regions. Also involved in activation of the ribosome quality control (RQC) pathway, a pathway that degrades nascent peptide chains during problematic translation. Drives the splitting of stalled ribosomes that are ubiquitinated in a ZNF598-dependent manner, as part of the ribosome quality control trigger (RQT) complex. Part of the ASC-1 complex that enhances NF-kappa-B, SRF and AP1 transactivation. The protein is Activating signal cointegrator 1 complex subunit 3 (ascc3) of Bos taurus (Bovine).